We begin with the raw amino-acid sequence, 122 residues long: Large ribosomal subunit protein uL14 (122 aa).

It belongs to the universal ribosomal protein uL14 family. In terms of assembly, part of the 50S ribosomal subunit. Forms a cluster with proteins L3 and L19. In the 70S ribosome, L14 and L19 interact and together make contacts with the 16S rRNA in bridges B5 and B8.

Functionally, binds to 23S rRNA. Forms part of two intersubunit bridges in the 70S ribosome. The chain is Large ribosomal subunit protein uL14 from Chlorobium phaeobacteroides (strain BS1).